A 527-amino-acid polypeptide reads, in one-letter code: F-box-like/WD repeat-containing protein TBL1X (527 aa).

N-acetylserine is present on Ser-2. Residues Thr-4–Gln-36 enclose the LisH domain. In terms of domain architecture, F-box-like spans Gly-41–Ala-86. The residue at position 102 (Lys-102) is an N6-acetyllysine. Residues Thr-127–Ile-164 form a disordered region. WD repeat units lie at residues Gly-180–Ser-219, Pro-236–Leu-275, Gln-277–Gln-316, Phe-319–Gln-359, Gly-360–Asp-399, Ala-402–Thr-450, Lys-453–Ser-492, and Arg-494–Arg-526. A Glycyl lysine isopeptide (Lys-Gly) (interchain with G-Cter in SUMO2) cross-link involves residue Lys-290.

This sequence belongs to the WD repeat EBI family. As to quaternary structure, homotetramer; dimer of dimers. Component of the N-Cor repressor complex, at least composed of NCOR1, NCOR2, HDAC3, TBL1X, TBL1R, CORO2A and GPS2. Component of a E3 ubiquitin ligase complex containing UBE2D1, SIAH1, CACYBP/SIP, SKP1, APC and TBL1X. Interacts with GPS2 (when sumoylated); leading to protect GPS2 against degradation by the proteasome. Probably part of other corepressor complexes, that do not contain NCOR1 and NCOR2. Interacts with histones H2B, H3a and H4. Interacts with MECP2; recruits TBL1X to the heterochromatin foci. Interacts with USP44. In terms of tissue distribution, expressed in the cochlea.

The protein localises to the nucleus. In terms of biological role, F-box-like protein involved in the recruitment of the ubiquitin/19S proteasome complex to nuclear receptor-regulated transcription units. Plays an essential role in transcription activation mediated by nuclear receptors. Probably acts as integral component of corepressor complexes that mediates the recruitment of the 19S proteasome complex, leading to the subsequent proteasomal degradation of transcription repressor complexes, thereby allowing cofactor exchange. The protein is F-box-like/WD repeat-containing protein TBL1X (Tbl1x) of Mus musculus (Mouse).